The primary structure comprises 244 residues: High frequency lysogenization protein HflD homolog (244 aa).

This sequence belongs to the HflD family.

The protein localises to the cytoplasm. It localises to the cell inner membrane. This Acinetobacter baumannii (strain SDF) protein is High frequency lysogenization protein HflD homolog.